Consider the following 331-residue polypeptide: Cathepsin S (331 aa).

Residues 1–16 (MNWLVWALLLCSSAMA) form the signal peptide. Residues 17 to 114 (HVHRDPTLDH…VTYKSDPNQK (98 aa)) constitute a propeptide, activation peptide. The N-linked (GlcNAc...) asparagine glycan is linked to Asn104. Intrachain disulfides connect Cys126-Cys224, Cys136-Cys180, Cys170-Cys213, and Cys272-Cys320. Cys139 is an active-site residue. Residues His278 and Asn298 contribute to the active site.

This sequence belongs to the peptidase C1 family. Monomer.

It localises to the lysosome. The protein resides in the secreted. The protein localises to the cytoplasmic vesicle. It is found in the phagosome. It catalyses the reaction Similar to cathepsin L, but with much less activity on Z-Phe-Arg-|-NHMec, and more activity on the Z-Val-Val-Arg-|-Xaa compound.. Functionally, thiol protease. Key protease responsible for the removal of the invariant chain from MHC class II molecules and MHC class II antigen presentation. The bond-specificity of this proteinase is in part similar to the specificities of cathepsin L. This chain is Cathepsin S (CTSS), found in Bos taurus (Bovine).